The chain runs to 151 residues: S-protein homolog 1 (151 aa).

The N-terminal stretch at 1 to 18 is a signal peptide; the sequence is MNCIKQFLLAICFSLALT.

This sequence belongs to the plant self-incompatibility (S1) protein family. Restricted to floral tissues.

Its subcellular location is the secreted. This chain is S-protein homolog 1, found in Arabidopsis thaliana (Mouse-ear cress).